We begin with the raw amino-acid sequence, 440 residues long: Methylenetetrahydrofolate--tRNA-(uracil-5-)-methyltransferase TrmFO (440 aa).

14 to 19 (GAGLAG) is a binding site for FAD.

Belongs to the MnmG family. TrmFO subfamily. The cofactor is FAD.

The protein localises to the cytoplasm. It carries out the reaction uridine(54) in tRNA + (6R)-5,10-methylene-5,6,7,8-tetrahydrofolate + NADH + H(+) = 5-methyluridine(54) in tRNA + (6S)-5,6,7,8-tetrahydrofolate + NAD(+). It catalyses the reaction uridine(54) in tRNA + (6R)-5,10-methylene-5,6,7,8-tetrahydrofolate + NADPH + H(+) = 5-methyluridine(54) in tRNA + (6S)-5,6,7,8-tetrahydrofolate + NADP(+). In terms of biological role, catalyzes the folate-dependent formation of 5-methyl-uridine at position 54 (M-5-U54) in all tRNAs. The chain is Methylenetetrahydrofolate--tRNA-(uracil-5-)-methyltransferase TrmFO from Bdellovibrio bacteriovorus (strain ATCC 15356 / DSM 50701 / NCIMB 9529 / HD100).